The following is a 278-amino-acid chain: uncharacterized protein (278 aa).

Basic and acidic residues predominate over residues 1–16 (MFGLKVKDAQKDDQKS). Disordered stretches follow at residues 1–86 (MFGL…RGSN) and 98–126 (FGTTSSSESGQSGTQGSTPSNPGPWTPWL). 2 stretches are compositionally biased toward low complexity: residues 33-45 (QGTSTTTQRRGSS) and 99-117 (GTTSSSESGQSGTQGSTPS).

The protein belongs to the adhesin P1 family.

This is an uncharacterized protein from Mycoplasma pneumoniae (strain ATCC 29342 / M129 / Subtype 1) (Mycoplasmoides pneumoniae).